The following is a 668-amino-acid chain: MAP kinase kinase PBS2 (668 aa).

The segment covering 1–15 has biased composition (basic and acidic residues); that stretch reads MEDKFANLSLHEKTG. Disordered regions lie at residues 1 to 43, 61 to 120, and 181 to 313; these read MEDK…SSHY, RALK…ASSK, and NPNR…GSSG. Composition is skewed to polar residues over residues 16-43, 68-91, and 104-120; these read KSSIQLNEQTGSDNGSAVKRTSSTSSHY, SVGSNQSEQDKGSSQSPKHIQQIV, and SKVSQRMSSQVVQASSK. Position 68 is a phosphoserine (S68). Residues 239–250 are compositionally biased toward low complexity; it reads AQQPQQFAPSPS. Position 269 is a phosphoserine (S269). Over residues 270-300 the composition is skewed to polar residues; it reads NPGSLINGVQSTSTSSSTEGPHDTVGTTPRT. Residues 301–310 show a composition bias toward low complexity; the sequence is GNSNNSSNSG. A Protein kinase domain is found at 360–623; sequence LEFLDELGHG…YAALTEHPWL (264 aa). ATP contacts are provided by residues 366-374 and K389; that span reads LGHGNYGNV. D485 (proton acceptor) is an active-site residue. S514 carries the post-translational modification Phosphoserine. T518 is modified (phosphothreonine).

The protein belongs to the protein kinase superfamily. STE Ser/Thr protein kinase family. MAP kinase kinase subfamily. In terms of assembly, interacts with NBP2, PTC1, SHO1 and STE11. Post-translationally, activated by phosphorylation by SSK2 or SSK22. Ser/Thr phosphorylation is also necessary for SHO1-mediated activation.

It is found in the cytoplasm. It carries out the reaction L-seryl-[protein] + ATP = O-phospho-L-seryl-[protein] + ADP + H(+). It catalyses the reaction L-threonyl-[protein] + ATP = O-phospho-L-threonyl-[protein] + ADP + H(+). The catalysed reaction is L-tyrosyl-[protein] + ATP = O-phospho-L-tyrosyl-[protein] + ADP + H(+). In terms of biological role, kinase involved in a signal transduction pathway that is activated by changes in the osmolarity of the extracellular environment. Activates the MAP kinase HOG1 by concomitant phosphorylation at 'Thr-174' and 'Tyr-176'. The sequence is that of MAP kinase kinase PBS2 (PBS2) from Saccharomyces cerevisiae (strain ATCC 204508 / S288c) (Baker's yeast).